A 355-amino-acid polypeptide reads, in one-letter code: Enhancer of mRNA-decapping protein 1 (355 aa).

Disordered stretches follow at residues 1-146 (MSSD…VDGM), 210-230 (MSQP…SQPM), and 301-330 (NSTA…KSSQ). Over residues 39–49 (AQKQQLPNGEQ) the composition is skewed to polar residues. Residues 57–67 (KQSRKRGSGRQ) are compositionally biased toward basic residues. A compositionally biased stretch (polar residues) spans 91-110 (SIPSGSAGSESAQKETSAGQ). Residues 123 to 142 (VPAGGPAGKSSSEPASASSA) are compositionally biased toward low complexity.

It belongs to the EDC family.

The protein resides in the cytoplasm. In terms of biological role, mRNA-binding protein which stimulates mRNA decapping. This is Enhancer of mRNA-decapping protein 1 (EDC1) from Eremothecium gossypii (strain ATCC 10895 / CBS 109.51 / FGSC 9923 / NRRL Y-1056) (Yeast).